A 466-amino-acid polypeptide reads, in one-letter code: ATP synthase subunit beta (466 aa).

155-162 (GGAGVGKT) contributes to the ATP binding site.

It belongs to the ATPase alpha/beta chains family. As to quaternary structure, F-type ATPases have 2 components, CF(1) - the catalytic core - and CF(0) - the membrane proton channel. CF(1) has five subunits: alpha(3), beta(3), gamma(1), delta(1), epsilon(1). CF(0) has three main subunits: a(1), b(2) and c(9-12). The alpha and beta chains form an alternating ring which encloses part of the gamma chain. CF(1) is attached to CF(0) by a central stalk formed by the gamma and epsilon chains, while a peripheral stalk is formed by the delta and b chains.

It localises to the cell inner membrane. It catalyses the reaction ATP + H2O + 4 H(+)(in) = ADP + phosphate + 5 H(+)(out). In terms of biological role, produces ATP from ADP in the presence of a proton gradient across the membrane. The catalytic sites are hosted primarily by the beta subunits. The polypeptide is ATP synthase subunit beta (Azoarcus sp. (strain BH72)).